Here is a 111-residue protein sequence, read N- to C-terminus: WAP four-disulfide core domain protein 12 (111 aa).

Residues 1 to 23 form the signal peptide; that stretch reads MGSSSFLVLMVSLALVTLVVVEG. Residues 27-74 form the WAP domain; the sequence is GIEKAGVCPADNVRCFKSNPPQCHTDQDCLGERKCCYLHCGFKCVIPV. Cystine bridges form between Cys34–Cys62, Cys41–Cys66, Cys49–Cys61, and Cys55–Cys70. A disordered region spans residues 80–111; the sequence is GGNKDEDVSGPHPEPGWEAKSPGSSSTGCPQI. Residues 101–111 are compositionally biased toward polar residues; the sequence is PGSSSTGCPQI.

The protein resides in the secreted. Antibacterial protein. Putative acid-stable proteinase inhibitor. This is WAP four-disulfide core domain protein 12 (WFDC12) from Colobus guereza (Mantled guereza).